The primary structure comprises 378 residues: Putative glutamate--cysteine ligase 2 (378 aa).

It belongs to the glutamate--cysteine ligase type 2 family. YbdK subfamily.

The catalysed reaction is L-cysteine + L-glutamate + ATP = gamma-L-glutamyl-L-cysteine + ADP + phosphate + H(+). Its function is as follows. ATP-dependent carboxylate-amine ligase which exhibits weak glutamate--cysteine ligase activity. The chain is Putative glutamate--cysteine ligase 2 from Salinispora tropica (strain ATCC BAA-916 / DSM 44818 / JCM 13857 / NBRC 105044 / CNB-440).